The primary structure comprises 526 residues: MPISLGNAFAKNFLGNAPKWYKSAILLFLVINPIAFYLDPFAAGWLLVVEFIFTLAMALKCYPLQPGGLLAIEAVLIGMTSAEQVKHELVANIEVLLLLVFMVAGIYFMKQLLLYVFTKLLIRIHSKTLLSLAFCLVSAFLSAFLDALTVIAVVISVATGFYAIYHKVSSGKEFGHQHDHTDDHSVHELSRQHLDDFRAFLRSLMMHAAIGTALGGVCTLVGEPQNLIIGEQAGWSFGEFAIRMAPVTIPVFICGLLTCILVEKCRWFGYGAKLPDAVRHIMEDYNRYEEAGRSPQDKAKLIVQAVIAIWLILGLAMHLAAVGLIGLSVIVLATSLTGINDEHSLGKAFQEALPFTALLAVFFSVVAVIIDQQLFRPVIQWVLAAEPDDQLALFYLANGLLSMVSDNVFVGTVYINEVKTALLNNAINREQFDLLAVAINTGTNLPSVATPNGQAAFLFMLTSALAPLLRLSYGRMVWMALPYTLVLGLVGFFSVELLLGPATEWFYQAGWLLPHSGAPAVLPALH.

The next 12 helical transmembrane spans lie at 25 to 45 (ILLF…AAGW), 52 to 72 (IFTL…LLAI), 89 to 109 (LVAN…IYFM), 130 to 164 (LSLA…FYAI), 204 to 224 (LMMH…VGEP), 242 to 262 (IRMA…CILV), 305 to 325 (AVIA…VGLI), 350 to 370 (QEAL…AVII), 391 to 411 (LALF…VFVG), 448 to 468 (VATP…LAPL), 479 to 499 (MALP…ELLL), and 505 to 525 (WFYQ…LPAL).

It belongs to the NhaB Na(+)/H(+) (TC 2.A.34) antiporter family.

The protein resides in the cell inner membrane. It carries out the reaction 2 Na(+)(in) + 3 H(+)(out) = 2 Na(+)(out) + 3 H(+)(in). Functionally, na(+)/H(+) antiporter that extrudes sodium in exchange for external protons. The protein is Na(+)/H(+) antiporter NhaB of Aeromonas salmonicida (strain A449).